Consider the following 444-residue polypeptide: uncharacterized protein (444 aa).

The region spanning 1–69 is the HTH gntR-type domain; it reads MEKYMSLLTR…PKSGYYIVKK (69 aa). The segment at residues 29-48 is a DNA-binding region (H-T-H motif); that stretch reads IRQLSARYQVSKSTVIRALQ. Lys286 carries the N6-(pyridoxal phosphate)lysine modification.

This sequence in the C-terminal section; belongs to the class-I pyridoxal-phosphate-dependent aminotransferase family. Pyridoxal 5'-phosphate is required as a cofactor.

This is an uncharacterized protein from Bacillus subtilis (strain 168).